The chain runs to 885 residues: Cadherin-1 (885 aa).

The first 26 residues, Met-1–Cys-26, serve as a signal peptide directing secretion. Residues Gln-27–Arg-156 constitute a propeptide that is removed on maturation. Residues Lys-121 to His-131 show a composition bias toward basic residues. Residues Lys-121–Val-141 form a disordered region. At Asp-157 to Ala-712 the chain is on the extracellular side. Cadherin domains lie at Trp-158–Phe-264, Thr-265–Phe-377, Asn-378–Phe-488, Ile-489–Pro-597, and Lys-607–Cys-688. Asp-259 contacts Ca(2+). The O-linked (Man...) serine glycan is linked to Ser-282. O-linked (Man...) threonine glycosylation occurs at Thr-287. Asp-290 provides a ligand contact to Ca(2+). O-linked (Man...) threonine glycans are attached at residues Thr-360, Thr-472, Thr-474, and Thr-511. Asn-560 carries an N-linked (GlcNAc...) asparagine glycan. O-linked (Man...) threonine glycosylation is found at Thr-578, Thr-580, and Thr-582. A glycan (N-linked (GlcNAc...) asparagine) is linked at Asn-639. A helical transmembrane segment spans residues Ile-713 to Phe-733. Topologically, residues Val-734–Asp-885 are cytoplasmic. Residues Asp-750–Phe-770 are disordered. 3 positions are modified to phosphotyrosine; by SRC: Tyr-756, Tyr-757, and Tyr-758. The segment covering Tyr-758–Phe-770 has biased composition (acidic residues). The segment at Glu-761–Leu-772 is required for binding CTNND1 and PSEN1. Phosphoserine is present on residues Ser-773, Ser-796, Ser-841, Ser-843, and Ser-849. The segment at Pro-792–Gly-811 is disordered. Residues Ile-814–Asp-885 are required for binding alpha, beta and gamma catenins.

As to quaternary structure, homodimer; disulfide-linked. Component of an E-cadherin/ catenin adhesion complex composed of at least E-cadherin/CDH1, beta-catenin/CTNNB1 or gamma-catenin/JUP, and potentially alpha-catenin/CTNNA1; the complex is located to adherens junctions. Found in a complex composed of CDH1, RAP1A and PKP3; PKP3 acts as a scaffold protein within the complex, the complex is required for CDH1 localization to mature desmosome cell junctions. Interacts with the TRPV4 and CTNNB1 complex. Interacts with CTNND1. The stable association of CTNNA1 is controversial as CTNNA1 was shown not to bind to F-actin when assembled in the complex. Alternatively, the CTNNA1-containing complex may be linked to F-actin by other proteins such as LIMA1. Interaction with PSEN1, cleaves CDH1 resulting in the disassociation of cadherin-based adherens junctions (CAJs). Interacts with AJAP1 and DLGAP5. Interacts with TBC1D2. Interacts with LIMA1. Interacts with CAV1. Interacts with PIP5K1C. Interacts with RAB8B. Interacts with DDR1; this stabilizes CDH1 at the cell surface and inhibits its internalization. Interacts with RAPGEF2. Interacts with KLRG1. Forms a ternary complex composed of ADAM10, CADH1 and EPHA4; within the complex, CADH1 is cleaved by ADAM10 which disrupts adherens junctions. Interacts with SPEF1. Interacts with CTNNB1 and PKP2. Interacts with AMOTL2; the interaction may facilitate binding of radial actin fibers to cell junction complexes. Interacts with DSG3; the interaction is required for CDH1 localization to developing adherens junctions. During apoptosis or with calcium influx, cleaved by a membrane-bound metalloproteinase (ADAM10), PS1/gamma-secretase and caspase-3. Processing by the metalloproteinase, induced by calcium influx, causes disruption of cell-cell adhesion and the subsequent release of beta-catenin into the cytoplasm. The residual membrane-tethered cleavage product is rapidly degraded via an intracellular proteolytic pathway. Cleavage by caspase-3 releases the cytoplasmic tail resulting in disintegration of the actin microfilament system. The gamma-secretase-mediated cleavage promotes disassembly of adherens junctions. During development of the cochlear organ of Corti, cleavage by ADAM10 at adherens junctions promotes pillar cell separation. In terms of processing, N-glycosylation at Asn-639 is essential for expression, folding and trafficking. Addition of bisecting N-acetylglucosamine by MGAT3 modulates its cell membrane location. Post-translationally, ubiquitinated by a SCF complex containing SKP2, which requires prior phosphorylation by CK1/CSNK1A1. Ubiquitinated by CBLL1/HAKAI, requires prior phosphorylation at Tyr-757. O-glycosylated. O-manosylated by TMTC1, TMTC2, TMTC3 or TMTC4. Thr-287 and Thr-511 are O-mannosylated by TMTC2 or TMTC4 but not TMTC1 or TMTC3.

Its subcellular location is the cell junction. It is found in the adherens junction. The protein resides in the cell membrane. The protein localises to the endosome. It localises to the golgi apparatus. Its subcellular location is the trans-Golgi network. It is found in the cytoplasm. The protein resides in the desmosome. Cadherins are calcium-dependent cell adhesion proteins. They preferentially interact with themselves in a homophilic manner in connecting cells; cadherins may thus contribute to the sorting of heterogeneous cell types. CDH1 is involved in mechanisms regulating cell-cell adhesions, mobility and proliferation of epithelial cells. Promotes organization of radial actin fiber structure and cellular response to contractile forces, via its interaction with AMOTL2 which facilitates anchoring of radial actin fibers to CDH1 junction complexes at the cell membrane. Plays a role in the early stages of desmosome cell-cell junction formation via facilitating the recruitment of DSG2 and DSP to desmosome plaques. Has a potent invasive suppressor role. It is a ligand for integrin alpha-E/beta-7. Its function is as follows. E-Cad/CTF2 promotes non-amyloidogenic degradation of Abeta precursors. Has a strong inhibitory effect on APP C99 and C83 production. In Canis lupus familiaris (Dog), this protein is Cadherin-1 (CDH1).